The chain runs to 312 residues: Glyoxylate/hydroxypyruvate reductase A (312 aa).

The active site involves R227. H275 serves as the catalytic Proton donor.

Belongs to the D-isomer specific 2-hydroxyacid dehydrogenase family. GhrA subfamily.

The protein resides in the cytoplasm. The catalysed reaction is glycolate + NADP(+) = glyoxylate + NADPH + H(+). It carries out the reaction (R)-glycerate + NAD(+) = 3-hydroxypyruvate + NADH + H(+). It catalyses the reaction (R)-glycerate + NADP(+) = 3-hydroxypyruvate + NADPH + H(+). Its function is as follows. Catalyzes the NADPH-dependent reduction of glyoxylate and hydroxypyruvate into glycolate and glycerate, respectively. This Escherichia coli (strain SMS-3-5 / SECEC) protein is Glyoxylate/hydroxypyruvate reductase A.